Consider the following 500-residue polypeptide: Aspartyl/glutamyl-tRNA(Asn/Gln) amidotransferase subunit B (500 aa).

Belongs to the GatB/GatE family. GatB subfamily. In terms of assembly, heterotrimer of A, B and C subunits.

The catalysed reaction is L-glutamyl-tRNA(Gln) + L-glutamine + ATP + H2O = L-glutaminyl-tRNA(Gln) + L-glutamate + ADP + phosphate + H(+). It carries out the reaction L-aspartyl-tRNA(Asn) + L-glutamine + ATP + H2O = L-asparaginyl-tRNA(Asn) + L-glutamate + ADP + phosphate + 2 H(+). In terms of biological role, allows the formation of correctly charged Asn-tRNA(Asn) or Gln-tRNA(Gln) through the transamidation of misacylated Asp-tRNA(Asn) or Glu-tRNA(Gln) in organisms which lack either or both of asparaginyl-tRNA or glutaminyl-tRNA synthetases. The reaction takes place in the presence of glutamine and ATP through an activated phospho-Asp-tRNA(Asn) or phospho-Glu-tRNA(Gln). This Brucella ovis (strain ATCC 25840 / 63/290 / NCTC 10512) protein is Aspartyl/glutamyl-tRNA(Asn/Gln) amidotransferase subunit B.